We begin with the raw amino-acid sequence, 71 residues long: DNA-directed RNA polymerase subunit Rpo10 (71 aa).

Cys6, Cys9, Cys52, and Cys53 together coordinate Zn(2+).

This sequence belongs to the archaeal Rpo10/eukaryotic RPB10 RNA polymerase subunit family. As to quaternary structure, part of the RNA polymerase complex. Zn(2+) serves as cofactor.

The protein resides in the cytoplasm. The catalysed reaction is RNA(n) + a ribonucleoside 5'-triphosphate = RNA(n+1) + diphosphate. Its function is as follows. DNA-dependent RNA polymerase (RNAP) catalyzes the transcription of DNA into RNA using the four ribonucleoside triphosphates as substrates. In Methanocella arvoryzae (strain DSM 22066 / NBRC 105507 / MRE50), this protein is DNA-directed RNA polymerase subunit Rpo10.